We begin with the raw amino-acid sequence, 292 residues long: Seed lectin (292 aa).

A signal peptide spans 1 to 37 (MATSNSRPHLLQTHKPFSVVLAISITFFLLLLNKVNS). Residues N82 and N154 are each glycosylated (N-linked (GlcNAc...) asparagine). D163 and D165 together coordinate Mn(2+). The Ca(2+) site is built by D165, H167, N169, and D172. Mn(2+)-binding residues include D172 and H177. An N-linked (GlcNAc...) asparagine glycan is attached at N186.

This sequence belongs to the leguminous lectin family.

Functionally, mannose/glucose-specific lectin. The sequence is that of Seed lectin from Styphnolobium japonicum (Japanese pagoda tree).